A 334-amino-acid chain; its full sequence is Aspartate carbamoyltransferase catalytic subunit (334 aa).

Carbamoyl phosphate-binding residues include Arg71 and Thr72. Lys99 is a binding site for L-aspartate. Residues Arg121, His151, and Gln154 each coordinate carbamoyl phosphate. Residues Arg184 and Arg239 each coordinate L-aspartate. Gly280 and Pro281 together coordinate carbamoyl phosphate.

This sequence belongs to the aspartate/ornithine carbamoyltransferase superfamily. ATCase family. Heterododecamer (2C3:3R2) of six catalytic PyrB chains organized as two trimers (C3), and six regulatory PyrI chains organized as three dimers (R2).

The catalysed reaction is carbamoyl phosphate + L-aspartate = N-carbamoyl-L-aspartate + phosphate + H(+). It functions in the pathway pyrimidine metabolism; UMP biosynthesis via de novo pathway; (S)-dihydroorotate from bicarbonate: step 2/3. Functionally, catalyzes the condensation of carbamoyl phosphate and aspartate to form carbamoyl aspartate and inorganic phosphate, the committed step in the de novo pyrimidine nucleotide biosynthesis pathway. This Pseudomonas syringae pv. tomato (strain ATCC BAA-871 / DC3000) protein is Aspartate carbamoyltransferase catalytic subunit.